A 101-amino-acid chain; its full sequence is Protein RADIALIS-like 2 (101 aa).

The region spanning 9–64 (YGSGSWTVKQNKAFERALAVYDQDTPDRWHNVARAVGGKTPEEAKRQYDLLVRDIE) is the SANT domain. Positions 69–101 (GHVPFPDYKTTTGNSNRGRLRDEEKRMRSMKLQ) are disordered.

As to expression, expressed in the funiculus of ovules and in embryos. In young ovules, expression is observed in the adaxial side of the funiculus (the stalk connecting the embryo sac to the placenta). Also expressed in heart-stage embryos, in the cortex and endodermis of the hypocotyl region but not in the cotyledons, shoot and root apical meristems, provasculature or epidermis. Not detected in young seedlings, mature roots or in young floral primordia.

It localises to the nucleus. Probable transcription factor. Required for female gametophyte development. The sequence is that of Protein RADIALIS-like 2 (RL2) from Arabidopsis thaliana (Mouse-ear cress).